The sequence spans 425 residues: Trigger factor (425 aa).

The region spanning glycine 163–proline 248 is the PPIase FKBP-type domain.

This sequence belongs to the FKBP-type PPIase family. Tig subfamily.

The protein resides in the cytoplasm. It catalyses the reaction [protein]-peptidylproline (omega=180) = [protein]-peptidylproline (omega=0). Its function is as follows. Involved in protein export. Acts as a chaperone by maintaining the newly synthesized protein in an open conformation. Functions as a peptidyl-prolyl cis-trans isomerase. The protein is Trigger factor of Bacillus cereus (strain G9842).